Reading from the N-terminus, the 419-residue chain is Serine--tRNA ligase (419 aa).

226–228 (TSE) is a binding site for L-serine. Residues 257 to 259 (RRE) and valine 273 each bind ATP. Glutamate 280 is an L-serine binding site. Position 344–347 (344–347 (ELTS)) interacts with ATP. Residue threonine 379 coordinates L-serine.

This sequence belongs to the class-II aminoacyl-tRNA synthetase family. Type-1 seryl-tRNA synthetase subfamily. In terms of assembly, homodimer. The tRNA molecule binds across the dimer.

The protein resides in the cytoplasm. The enzyme catalyses tRNA(Ser) + L-serine + ATP = L-seryl-tRNA(Ser) + AMP + diphosphate + H(+). The catalysed reaction is tRNA(Sec) + L-serine + ATP = L-seryl-tRNA(Sec) + AMP + diphosphate + H(+). It functions in the pathway aminoacyl-tRNA biosynthesis; selenocysteinyl-tRNA(Sec) biosynthesis; L-seryl-tRNA(Sec) from L-serine and tRNA(Sec): step 1/1. Functionally, catalyzes the attachment of serine to tRNA(Ser). Is also able to aminoacylate tRNA(Sec) with serine, to form the misacylated tRNA L-seryl-tRNA(Sec), which will be further converted into selenocysteinyl-tRNA(Sec). This Corynebacterium diphtheriae (strain ATCC 700971 / NCTC 13129 / Biotype gravis) protein is Serine--tRNA ligase.